Reading from the N-terminus, the 123-residue chain is Cysteine proteinase inhibitor 8 (123 aa).

The first 19 residues, 1–19, serve as a signal peptide directing secretion; that stretch reads MARIPLLLALLLAVSAAAA. In terms of domain architecture, Cystatin spans 33 to 91; that stretch reads GGWSPITDVGDPHIQELGGWAVERHASLSSDGLRFRRVTSGEQQVVSGMNYRLVVSASD. Positions 76–80 match the Secondary area of contact motif; sequence QVVSG.

This sequence belongs to the cystatin family. Phytocystatin subfamily.

The protein localises to the secreted. Specific inhibitor of cysteine proteinases. Probably involved in the regulation of endogenous processes and in defense against pests and pathogens. In Oryza sativa subsp. japonica (Rice), this protein is Cysteine proteinase inhibitor 8.